A 77-amino-acid chain; its full sequence is ATP synthase subunit 9, mitochondrial (77 aa).

Helical transmembrane passes span 8–28 and 45–72; these read MGAG…GNVL and LFGY…LISF.

The protein belongs to the ATPase C chain family. In terms of assembly, F-type ATPases have 2 components, CF(1) - the catalytic core - and CF(0) - the membrane proton channel. CF(1) has five subunits: alpha(3), beta(3), gamma(1), delta(1), epsilon(1). CF(0) has three main subunits: a, b and c.

The protein localises to the mitochondrion membrane. Its function is as follows. This protein is one of the chains of the nonenzymatic membrane component (F0) of mitochondrial ATPase. This chain is ATP synthase subunit 9, mitochondrial (ATP9), found in Petunia sp. (Petunia).